A 327-amino-acid chain; its full sequence is Protoheme IX farnesyltransferase (327 aa).

Helical transmembrane passes span 35–55, 60–80, 106–126, 129–149, 157–177, 185–205, 234–254, and 283–303; these read LIPL…GWPL, LVCT…LNCL, SAFI…VSGV, LAAG…TALL, IVIG…AATG, WLFA…ALLL, GWIT…GGAF, and AKAL…LLIL.

Belongs to the UbiA prenyltransferase family. Protoheme IX farnesyltransferase subfamily.

The protein resides in the cell inner membrane. The catalysed reaction is heme b + (2E,6E)-farnesyl diphosphate + H2O = Fe(II)-heme o + diphosphate. Its pathway is porphyrin-containing compound metabolism; heme O biosynthesis; heme O from protoheme: step 1/1. Its function is as follows. Converts heme B (protoheme IX) to heme O by substitution of the vinyl group on carbon 2 of heme B porphyrin ring with a hydroxyethyl farnesyl side group. The polypeptide is Protoheme IX farnesyltransferase (Synechococcus sp. (strain CC9605)).